Here is a 282-residue protein sequence, read N- to C-terminus: 3-methyl-2-oxobutanoate hydroxymethyltransferase (282 aa).

The Mg(2+) site is built by aspartate 45 and aspartate 84. Residues 45–46, aspartate 84, and lysine 114 contribute to the 3-methyl-2-oxobutanoate site; that span reads DS. Glutamate 116 is a binding site for Mg(2+). Glutamate 183 acts as the Proton acceptor in catalysis.

Belongs to the PanB family. In terms of assembly, homodecamer; pentamer of dimers. The cofactor is Mg(2+).

Its subcellular location is the cytoplasm. The catalysed reaction is 3-methyl-2-oxobutanoate + (6R)-5,10-methylene-5,6,7,8-tetrahydrofolate + H2O = 2-dehydropantoate + (6S)-5,6,7,8-tetrahydrofolate. It participates in cofactor biosynthesis; (R)-pantothenate biosynthesis; (R)-pantoate from 3-methyl-2-oxobutanoate: step 1/2. In terms of biological role, catalyzes the reversible reaction in which hydroxymethyl group from 5,10-methylenetetrahydrofolate is transferred onto alpha-ketoisovalerate to form ketopantoate. The protein is 3-methyl-2-oxobutanoate hydroxymethyltransferase of Syntrophobacter fumaroxidans (strain DSM 10017 / MPOB).